A 256-amino-acid chain; its full sequence is Pimeloyl-[acyl-carrier protein] methyl ester esterase (256 aa).

Residues 15 to 242 (HLVLLHGWGL…AAHAPFISHP (228 aa)) enclose the AB hydrolase-1 domain. Residues tryptophan 22, 82–83 (SL), and 143–147 (FLALQ) each bind substrate. The Nucleophile role is filled by serine 82. Residues aspartate 207 and histidine 235 contribute to the active site. Substrate is bound at residue histidine 235.

It belongs to the AB hydrolase superfamily. Carboxylesterase BioH family. Monomer.

It localises to the cytoplasm. It catalyses the reaction 6-carboxyhexanoyl-[ACP] methyl ester + H2O = 6-carboxyhexanoyl-[ACP] + methanol + H(+). It functions in the pathway cofactor biosynthesis; biotin biosynthesis. In terms of biological role, the physiological role of BioH is to remove the methyl group introduced by BioC when the pimeloyl moiety is complete. It allows to synthesize pimeloyl-ACP via the fatty acid synthetic pathway through the hydrolysis of the ester bonds of pimeloyl-ACP esters. This is Pimeloyl-[acyl-carrier protein] methyl ester esterase from Citrobacter koseri (strain ATCC BAA-895 / CDC 4225-83 / SGSC4696).